The chain runs to 149 residues: SsrA-binding protein (149 aa).

The tract at residues 123 to 149 is disordered; the sequence is KQFDKRETEKQRDWQREKARIMKGGKE.

Belongs to the SmpB family.

Its subcellular location is the cytoplasm. Its function is as follows. Required for rescue of stalled ribosomes mediated by trans-translation. Binds to transfer-messenger RNA (tmRNA), required for stable association of tmRNA with ribosomes. tmRNA and SmpB together mimic tRNA shape, replacing the anticodon stem-loop with SmpB. tmRNA is encoded by the ssrA gene; the 2 termini fold to resemble tRNA(Ala) and it encodes a 'tag peptide', a short internal open reading frame. During trans-translation Ala-aminoacylated tmRNA acts like a tRNA, entering the A-site of stalled ribosomes, displacing the stalled mRNA. The ribosome then switches to translate the ORF on the tmRNA; the nascent peptide is terminated with the 'tag peptide' encoded by the tmRNA and targeted for degradation. The ribosome is freed to recommence translation, which seems to be the essential function of trans-translation. The protein is SsrA-binding protein of Cupriavidus taiwanensis (strain DSM 17343 / BCRC 17206 / CCUG 44338 / CIP 107171 / LMG 19424 / R1) (Ralstonia taiwanensis (strain LMG 19424)).